Reading from the N-terminus, the 421-residue chain is ATP-dependent RNA helicase RhlB (421 aa).

The Q motif motif lies at 9–37; sequence QKFSDFALHPQVVEALEKKGFYNCTPIQA. One can recognise a Helicase ATP-binding domain in the interval 40 to 219; sequence LPLTLAGRDV…FEQMNNAEYV (180 aa). 53–60 contacts ATP; sequence AQTGTGKT. Residues 165 to 168 carry the DEAD box motif; it reads DEAD. The region spanning 245 to 390 is the Helicase C-terminal domain; the sequence is RLLQTLIEEE…VSKYNPEALM (146 aa). Positions 396-421 are disordered; sequence PLRLTRSRPGNGPRRAGAPRNRRRSG. Positions 402-414 are enriched in low complexity; it reads SRPGNGPRRAGAP.

This sequence belongs to the DEAD box helicase family. RhlB subfamily. As to quaternary structure, component of the RNA degradosome, which is a multiprotein complex involved in RNA processing and mRNA degradation.

It localises to the cytoplasm. The enzyme catalyses ATP + H2O = ADP + phosphate + H(+). Its function is as follows. DEAD-box RNA helicase involved in RNA degradation. Has RNA-dependent ATPase activity and unwinds double-stranded RNA. The chain is ATP-dependent RNA helicase RhlB from Salmonella paratyphi A (strain AKU_12601).